The primary structure comprises 293 residues: Vibriobactin-specific isochorismatase (293 aa).

Positions 211–287 (KLTGLSLRTM…QWWQTIQANL (77 aa)) constitute a Carrier domain. The residue at position 248 (S248) is an O-(pantetheine 4'-phosphoryl)serine.

This sequence belongs to the isochorismatase family. Requires pantetheine 4'-phosphate as cofactor.

It catalyses the reaction isochorismate + H2O = (2S,3S)-2,3-dihydroxy-2,3-dihydrobenzoate + pyruvate. Its pathway is siderophore biosynthesis; vibriobactin biosynthesis. Functionally, involved in the biosynthesis of the catechol siderophore vibriobactin. Vibriobactin is a chelating compound involved in transporting iron from the bacterial environment into the cell cytoplasm. The chain is Vibriobactin-specific isochorismatase (vibB) from Vibrio cholerae serotype O1 (strain ATCC 39541 / Classical Ogawa 395 / O395).